The primary structure comprises 321 residues: Cytoskeleton protein RodZ (321 aa).

Residues 1-111 lie on the Cytoplasmic side of the membrane; the sequence is MNTEATHDQN…LGKRRKKRDG (111 aa). Positions 19-71 constitute an HTH cro/C1-type domain; it reads LRNAREQLGLSQQAVAERLCLKVSTVRDIEEDKAPSDLASTFLRGYIRSYARL. The H-T-H motif DNA-binding region spans 30–49; it reads QQAVAERLCLKVSTVRDIEE. A helical; Signal-anchor for type II membrane protein transmembrane segment spans residues 112-132; the sequence is WLMSFTWLVLFVVVGLTGAWW. The Periplasmic portion of the chain corresponds to 133–321; the sequence is WQNHKAQQEE…TINAEPTSAQ (189 aa). Positions 167 to 190 are disordered; sequence DTRAAASQDTTPAETAPAAPVDST. A compositionally biased stretch (low complexity) spans 176 to 190; the sequence is TTPAETAPAAPVDST.

It belongs to the RodZ family.

It is found in the cell inner membrane. In terms of biological role, cytoskeletal protein that is involved in cell-shape control through regulation of the length of the long axis. This is Cytoskeleton protein RodZ from Salmonella arizonae (strain ATCC BAA-731 / CDC346-86 / RSK2980).